The sequence spans 232 residues: Biosynthetic peptidoglycan transglycosylase (232 aa).

Residues 14–34 (AAVALVLLYQLWIFAHVLWWI) traverse the membrane as a helical segment.

This sequence belongs to the glycosyltransferase 51 family.

The protein resides in the cell inner membrane. It catalyses the reaction [GlcNAc-(1-&gt;4)-Mur2Ac(oyl-L-Ala-gamma-D-Glu-L-Lys-D-Ala-D-Ala)](n)-di-trans,octa-cis-undecaprenyl diphosphate + beta-D-GlcNAc-(1-&gt;4)-Mur2Ac(oyl-L-Ala-gamma-D-Glu-L-Lys-D-Ala-D-Ala)-di-trans,octa-cis-undecaprenyl diphosphate = [GlcNAc-(1-&gt;4)-Mur2Ac(oyl-L-Ala-gamma-D-Glu-L-Lys-D-Ala-D-Ala)](n+1)-di-trans,octa-cis-undecaprenyl diphosphate + di-trans,octa-cis-undecaprenyl diphosphate + H(+). The protein operates within cell wall biogenesis; peptidoglycan biosynthesis. Peptidoglycan polymerase that catalyzes glycan chain elongation from lipid-linked precursors. The chain is Biosynthetic peptidoglycan transglycosylase from Thiobacillus denitrificans (strain ATCC 25259 / T1).